Consider the following 380-residue polypeptide: Cytochrome b (380 aa).

4 consecutive transmembrane segments (helical) span residues 34 to 54 (FGSLLAVCLATQILTGLLLAM), 78 to 99 (WLIRNLHANGASFFFICIFLHI), 114 to 134 (WNTGVILLLTLMATAFVGYVL), and 179 to 199 (FFALHFLLPFVIAGITIIHLT). Heme b is bound by residues histidine 84 and histidine 98. Heme b is bound by residues histidine 183 and histidine 197. A ubiquinone is bound at residue histidine 202. The next 4 helical transmembrane spans lie at 227–247 (LKDILGLALMFIPFLALALFS), 289–309 (LGGVLALAASVLILLLIPFLH), 321–341 (LSQILFWLLVANLLVLTWIGS), and 348–368 (FIIIGQVASFSYFNILLILFP).

It belongs to the cytochrome b family. In terms of assembly, the cytochrome bc1 complex contains 11 subunits: 3 respiratory subunits (MT-CYB, CYC1 and UQCRFS1), 2 core proteins (UQCRC1 and UQCRC2) and 6 low-molecular weight proteins (UQCRH/QCR6, UQCRB/QCR7, UQCRQ/QCR8, UQCR10/QCR9, UQCR11/QCR10 and a cleavage product of UQCRFS1). This cytochrome bc1 complex then forms a dimer. It depends on heme b as a cofactor.

The protein resides in the mitochondrion inner membrane. In terms of biological role, component of the ubiquinol-cytochrome c reductase complex (complex III or cytochrome b-c1 complex) that is part of the mitochondrial respiratory chain. The b-c1 complex mediates electron transfer from ubiquinol to cytochrome c. Contributes to the generation of a proton gradient across the mitochondrial membrane that is then used for ATP synthesis. The chain is Cytochrome b (MT-CYB) from Polyplectron bicalcaratum (Grey peacock-pheasant).